Here is a 1025-residue protein sequence, read N- to C-terminus: Multidrug resistance protein MdtC (1025 aa).

12 consecutive transmembrane segments (helical) span residues 3-23, 333-353, 360-380, 387-407, 431-451, 463-483, 528-548, 853-873, 875-895, 897-917, 953-973, and 984-1004; these read FFAL…AITL, EVEQ…FLFL, IIPA…MYLC, LSLM…IVVL, VGFT…PLLL, FAVT…TLTP, LVGV…ISIP, VILI…LYES, VHPL…LLAL, LFNA…IGIV, PIMM…LSGG, and ITIV…TPVV.

It belongs to the resistance-nodulation-cell division (RND) (TC 2.A.6) family. MdtC subfamily. In terms of assembly, part of a tripartite efflux system composed of MdtA, MdtB and MdtC. MdtC forms a heteromultimer with MdtB.

It is found in the cell inner membrane. In terms of biological role, the MdtABC tripartite complex confers resistance against novobiocin and deoxycholate. This Escherichia coli (strain ATCC 8739 / DSM 1576 / NBRC 3972 / NCIMB 8545 / WDCM 00012 / Crooks) protein is Multidrug resistance protein MdtC.